A 307-amino-acid polypeptide reads, in one-letter code: Transaldolase (307 aa).

Residue K125 is the Schiff-base intermediate with substrate of the active site.

Belongs to the transaldolase family. Type 1 subfamily. As to quaternary structure, homodimer.

It localises to the cytoplasm. It catalyses the reaction D-sedoheptulose 7-phosphate + D-glyceraldehyde 3-phosphate = D-erythrose 4-phosphate + beta-D-fructose 6-phosphate. The protein operates within carbohydrate degradation; pentose phosphate pathway; D-glyceraldehyde 3-phosphate and beta-D-fructose 6-phosphate from D-ribose 5-phosphate and D-xylulose 5-phosphate (non-oxidative stage): step 2/3. Functionally, transaldolase is important for the balance of metabolites in the pentose-phosphate pathway. This Pseudomonas aeruginosa (strain LESB58) protein is Transaldolase.